Consider the following 257-residue polypeptide: Snake venom serine protease KN3 (257 aa).

Positions 1-18 are cleaved as a signal peptide; it reads MVLIRVLANLLILQLSYA. Residues 19-24 constitute a propeptide that is removed on maturation; the sequence is QKSSKL. The 224-residue stretch at 25-248 folds into the Peptidase S1 domain; sequence VVGGDECNIN…HLDWIKSIIA (224 aa). 6 disulfide bridges follow: C31-C162, C49-C65, C97-C255, C141-C209, C173-C188, and C199-C224. Residues H64 and D109 each act as charge relay system in the active site. N-linked (GlcNAc...) asparagine glycosylation is found at N120, N121, and N164. The Charge relay system role is filled by S203.

This sequence belongs to the peptidase S1 family. Snake venom subfamily. Monomer. As to expression, expressed by the venom gland.

Its subcellular location is the secreted. Functionally, snake venom serine protease that may act in the hemostasis system of the prey. This is Snake venom serine protease KN3 from Trimeresurus stejnegeri (Chinese green tree viper).